Here is a 775-residue protein sequence, read N- to C-terminus: Melanoma-associated antigen D1 (775 aa).

The disordered stretch occupies residues 37-330; sequence SEAPPTSQAT…PARQTPSAWQ (294 aa). A compositionally biased stretch (low complexity) spans 39-50; it reads APPTSQATAAAS. Composition is skewed to polar residues over residues 52–63, 84–100, 107–120, 149–178, 221–235, 247–258, and 296–308; these read PNASPQSSQPPT, KAQN…SQAR, KNQS…QNGT, GQNS…NQPK, AQTS…NVES, VNNLNVEENNSG, and LAWQ…QNQT. Repeat copies occupy residues 292-297, 298-303, 304-309, 329-334, 335-340, 341-346, 347-352, 353-358, 359-364, 365-370, 371-376, 377-382, 383-388, 389-394, 395-400, 401-406, 407-412, 413-418, and 419-424. Positions 292–441 are 22 X 6 AA tandem repeats of W-[PQ]-X-P-X-X; it reads WQTPLAWQNP…IPPDWQNLRP (150 aa). Over residues 309–326 the composition is skewed to low complexity; the sequence is ARQTPPAARQSPPARQTP. Residues 374–409 form a disordered region; it reads TPGWQSPPSWQAPPSWQSPQDWQGPPDWQVPPDWSM. Residues 375–406 show a composition bias toward low complexity; the sequence is PGWQSPPSWQAPPSWQSPQDWQGPPDWQVPPD. A 20; approximate repeat occupies 425-429; the sequence is WIPAD. A run of 2 repeats spans residues 430–435 and 436–441. Positions 437-452 are enriched in low complexity; the sequence is QNLRPSPNLRSSSNSR. A disordered region spans residues 437 to 463; sequence QNLRPSPNLRSSSNSRASQNQGPPQPR. In terms of domain architecture, MAGE spans 468 to 666; sequence LQERANKLVK…RDWTAQFMEA (199 aa).

In terms of assembly, interacts with DLX5, DLX7 and MSX2 and forms homomultimers. Interacts with UNC5A. Interacts with TRIM28 and PJA1. Interacts with NGFR/p75NTR and RORA. As to expression, ubiquitously expressed in many adult tissues, except for the spleen. Expressed in osteoblastic and chondrogenic cell lines and also during embryonic development.

Its subcellular location is the nucleus. The protein resides in the cytoplasm. It is found in the cell membrane. Functionally, involved in the apoptotic response after nerve growth factor (NGF) binding in neuronal cells. Inhibits cell cycle progression, and facilitates NGFR-mediated apoptosis. May act as a regulator of the function of DLX family members. May enhance ubiquitin ligase activity of RING-type zinc finger-containing E3 ubiquitin-protein ligases. Proposed to act through recruitment and/or stabilization of the Ubl-conjugating enzyme (E2) at the E3:substrate complex. Plays a role in the circadian rhythm regulation. May act as RORA coregulator, modulating the expression of core clock genes such as BMAL1 and NFIL3, induced, or NR1D1, repressed. The protein is Melanoma-associated antigen D1 (Maged1) of Mus musculus (Mouse).